The chain runs to 431 residues: Adenylosuccinate synthetase (431 aa).

GTP-binding positions include 13-19 (GDEGKGK) and 41-43 (GHT). Catalysis depends on aspartate 14, which acts as the Proton acceptor. Mg(2+) contacts are provided by aspartate 14 and glycine 41. IMP-binding positions include 14 to 17 (DEGK), 39 to 42 (NAGH), threonine 130, arginine 144, glutamine 225, threonine 240, and arginine 304. The active-site Proton donor is the histidine 42. A substrate-binding site is contributed by 300–306 (ATTGRKR). Residues arginine 306, 332 to 334 (KLD), and 415 to 417 (STG) contribute to the GTP site.

This sequence belongs to the adenylosuccinate synthetase family. As to quaternary structure, homodimer. Mg(2+) serves as cofactor.

The protein resides in the cytoplasm. The enzyme catalyses IMP + L-aspartate + GTP = N(6)-(1,2-dicarboxyethyl)-AMP + GDP + phosphate + 2 H(+). It participates in purine metabolism; AMP biosynthesis via de novo pathway; AMP from IMP: step 1/2. Plays an important role in the de novo pathway of purine nucleotide biosynthesis. Catalyzes the first committed step in the biosynthesis of AMP from IMP. This Shewanella piezotolerans (strain WP3 / JCM 13877) protein is Adenylosuccinate synthetase.